Reading from the N-terminus, the 148-residue chain is Ubiquitin-conjugating enzyme E2 11 (148 aa).

The UBC core domain occupies 1-147 (MASKRILKEL…ARSWTQKYAM (147 aa)). Cysteine 85 acts as the Glycyl thioester intermediate in catalysis.

Belongs to the ubiquitin-conjugating enzyme family. Interacts with the E3 ubiquitin-protein ligases MBR1 and MBR2. In terms of tissue distribution, ubiquitously expressed. Mainly in petals.

It catalyses the reaction S-ubiquitinyl-[E1 ubiquitin-activating enzyme]-L-cysteine + [E2 ubiquitin-conjugating enzyme]-L-cysteine = [E1 ubiquitin-activating enzyme]-L-cysteine + S-ubiquitinyl-[E2 ubiquitin-conjugating enzyme]-L-cysteine.. The protein operates within protein modification; protein ubiquitination. Functionally, accepts the ubiquitin from the E1 complex and catalyzes its covalent attachment to other proteins. Mediates the selective degradation of short-lived and abnormal proteins. The sequence is that of Ubiquitin-conjugating enzyme E2 11 (UBC11) from Arabidopsis thaliana (Mouse-ear cress).